A 221-amino-acid polypeptide reads, in one-letter code: Cutinase 3 (221 aa).

The first 17 residues, M1–A17, serve as a signal peptide directing secretion. Cystine bridges form between C44-C122 and C70-C84. Catalysis depends on S133, which acts as the Nucleophile. A disulfide bridge connects residues C184 and C191. D188 is an active-site residue. The active-site Proton donor/acceptor is the H201.

Belongs to the cutinase family.

The protein localises to the secreted. It catalyses the reaction cutin + H2O = cutin monomers.. Functionally, catalyzes the hydrolysis of complex carboxylic polyesters found in the cell wall of plants. Degrades cutin, a macromolecule that forms the structure of the plant cuticle. Also degrades suberin, a specialized macromolecule found in the cell wall of various plant tissues. In Emericella nidulans (strain FGSC A4 / ATCC 38163 / CBS 112.46 / NRRL 194 / M139) (Aspergillus nidulans), this protein is Cutinase 3.